The sequence spans 367 residues: Phosphoribosylaminoimidazole-succinocarboxamide synthase (367 aa).

It belongs to the SAICAR synthetase family.

The catalysed reaction is 5-amino-1-(5-phospho-D-ribosyl)imidazole-4-carboxylate + L-aspartate + ATP = (2S)-2-[5-amino-1-(5-phospho-beta-D-ribosyl)imidazole-4-carboxamido]succinate + ADP + phosphate + 2 H(+). It participates in purine metabolism; IMP biosynthesis via de novo pathway; 5-amino-1-(5-phospho-D-ribosyl)imidazole-4-carboxamide from 5-amino-1-(5-phospho-D-ribosyl)imidazole-4-carboxylate: step 1/2. This Shewanella amazonensis (strain ATCC BAA-1098 / SB2B) protein is Phosphoribosylaminoimidazole-succinocarboxamide synthase.